A 496-amino-acid chain; its full sequence is Apolipoprotein N-acyltransferase (496 aa).

6 consecutive transmembrane segments (helical) span residues 6–26 (IICFLLGILSGLVFAPTFFIP), 50–70 (FGYLFGFGHFLSGMYWISIGV), 77–97 (FWWAIPFALFGLPIILAFFIS), 114–134 (LIFCLLWVLFEWIRSWICTGL), 148–168 (ILIQPLSITGIYGLSFIVIYI), and 183–203 (LKILLASSMLILTVMVIYGAM). The 245-residue stretch at 220 to 464 (VQPSIPQTAK…QGLIPQKLTT (245 aa)) folds into the CN hydrolase domain. Glu259 (proton acceptor) is an active-site residue. Lys322 is a catalytic residue. Cys372 functions as the Nucleophile in the catalytic mechanism. Residues 474–494 (FAMLLPIVFILLIHYLLSLIF) traverse the membrane as a helical segment.

This sequence belongs to the CN hydrolase family. Apolipoprotein N-acyltransferase subfamily.

It is found in the cell inner membrane. It carries out the reaction N-terminal S-1,2-diacyl-sn-glyceryl-L-cysteinyl-[lipoprotein] + a glycerophospholipid = N-acyl-S-1,2-diacyl-sn-glyceryl-L-cysteinyl-[lipoprotein] + a 2-acyl-sn-glycero-3-phospholipid + H(+). It participates in protein modification; lipoprotein biosynthesis (N-acyl transfer). Catalyzes the phospholipid dependent N-acylation of the N-terminal cysteine of apolipoprotein, the last step in lipoprotein maturation. The polypeptide is Apolipoprotein N-acyltransferase (Rickettsia typhi (strain ATCC VR-144 / Wilmington)).